The primary structure comprises 251 residues: Ubiquinone/menaquinone biosynthesis C-methyltransferase UbiE (251 aa).

Residues Thr74, Asp95, 123–124 (NA), and Ser140 each bind S-adenosyl-L-methionine.

Belongs to the class I-like SAM-binding methyltransferase superfamily. MenG/UbiE family.

The enzyme catalyses a 2-demethylmenaquinol + S-adenosyl-L-methionine = a menaquinol + S-adenosyl-L-homocysteine + H(+). It carries out the reaction a 2-methoxy-6-(all-trans-polyprenyl)benzene-1,4-diol + S-adenosyl-L-methionine = a 5-methoxy-2-methyl-3-(all-trans-polyprenyl)benzene-1,4-diol + S-adenosyl-L-homocysteine + H(+). Its pathway is quinol/quinone metabolism; menaquinone biosynthesis; menaquinol from 1,4-dihydroxy-2-naphthoate: step 2/2. The protein operates within cofactor biosynthesis; ubiquinone biosynthesis. Functionally, methyltransferase required for the conversion of demethylmenaquinol (DMKH2) to menaquinol (MKH2) and the conversion of 2-polyprenyl-6-methoxy-1,4-benzoquinol (DDMQH2) to 2-polyprenyl-3-methyl-6-methoxy-1,4-benzoquinol (DMQH2). The protein is Ubiquinone/menaquinone biosynthesis C-methyltransferase UbiE of Yersinia pestis bv. Antiqua (strain Angola).